Here is a 145-residue protein sequence, read N- to C-terminus: D-aminoacyl-tRNA deacylase (145 aa).

The short motif at 137–138 (GP) is the Gly-cisPro motif, important for rejection of L-amino acids element.

It belongs to the DTD family. In terms of assembly, homodimer.

The protein localises to the cytoplasm. The catalysed reaction is glycyl-tRNA(Ala) + H2O = tRNA(Ala) + glycine + H(+). The enzyme catalyses a D-aminoacyl-tRNA + H2O = a tRNA + a D-alpha-amino acid + H(+). Its function is as follows. An aminoacyl-tRNA editing enzyme that deacylates mischarged D-aminoacyl-tRNAs. Also deacylates mischarged glycyl-tRNA(Ala), protecting cells against glycine mischarging by AlaRS. Acts via tRNA-based rather than protein-based catalysis; rejects L-amino acids rather than detecting D-amino acids in the active site. By recycling D-aminoacyl-tRNA to D-amino acids and free tRNA molecules, this enzyme counteracts the toxicity associated with the formation of D-aminoacyl-tRNA entities in vivo and helps enforce protein L-homochirality. This Francisella tularensis subsp. novicida (strain U112) protein is D-aminoacyl-tRNA deacylase.